The sequence spans 490 residues: Serine hydroxymethyltransferase (490 aa).

(6S)-5,6,7,8-tetrahydrofolate is bound by residues Leu179 and 183-185 (GHL). Lys291 bears the N6-(pyridoxal phosphate)lysine mark. Lys362 is covalently cross-linked (Isoglutamyl lysine isopeptide (Lys-Gln) (interchain with Q-Cter in protein Pup)).

Belongs to the SHMT family. As to quaternary structure, homodimer. Requires pyridoxal 5'-phosphate as cofactor.

It localises to the cytoplasm. The enzyme catalyses (6R)-5,10-methylene-5,6,7,8-tetrahydrofolate + glycine + H2O = (6S)-5,6,7,8-tetrahydrofolate + L-serine. Its pathway is one-carbon metabolism; tetrahydrofolate interconversion. It functions in the pathway amino-acid biosynthesis; glycine biosynthesis; glycine from L-serine: step 1/1. Catalyzes the reversible interconversion of serine and glycine with tetrahydrofolate (THF) serving as the one-carbon carrier. This reaction serves as the major source of one-carbon groups required for the biosynthesis of purines, thymidylate, methionine, and other important biomolecules. Also exhibits THF-independent aldolase activity toward beta-hydroxyamino acids, producing glycine and aldehydes, via a retro-aldol mechanism. The protein is Serine hydroxymethyltransferase of Mycolicibacterium smegmatis (strain ATCC 700084 / mc(2)155) (Mycobacterium smegmatis).